The primary structure comprises 220 residues: MPGLTLGDVVPDLELDTTHGKIRLHDFVGDAYAIIFSHPADFTPVCTTELSEMAGYAGEFDKRGVKLLGFSCDDVESHKDWIKDIEAYKPGRRVGFPIVADPDREAIRQLNMIDADEKDTAGGELPNRALHIVGPDKKVKLSFLFPACTGRNMAEVLRATDALLTAARHRVATPVNWKPGERVVIPPGVSDEEAKARFPAGFETAQLPSNKCYLRFTQVD.

Residues 4 to 165 enclose the Thioredoxin domain; the sequence is LTLGDVVPDL…VLRATDALLT (162 aa). Residue Cys-46 is the Cysteine sulfenic acid (-SOH) intermediate of the active site. The Bipartite nuclear localization signal signature appears at 195 to 218; that stretch reads KARFPAGFETAQLPSNKCYLRFTQ.

This sequence belongs to the peroxiredoxin family. Prx6 subfamily.

Its subcellular location is the nucleus. It localises to the cytoplasm. It catalyses the reaction a hydroperoxide + [thioredoxin]-dithiol = an alcohol + [thioredoxin]-disulfide + H2O. Its function is as follows. Thiol-specific peroxidase that catalyzes the reduction of hydrogen peroxide and organic hydroperoxides to water and alcohols, respectively. Seems to contribute to the inhibition of germination during stress. The chain is 1-Cys peroxiredoxin B from Oryza sativa subsp. indica (Rice).